Consider the following 64-residue polypeptide: Large ribosomal subunit protein uL30 (64 aa).

Part of the 50S ribosomal subunit. The protein is methylated on either Ala-2 or Lys-3.

This is Large ribosomal subunit protein uL30 from Rhodopseudomonas palustris (strain ATCC BAA-98 / CGA009).